The following is a 358-amino-acid chain: Nicotinate-nucleotide--dimethylbenzimidazole phosphoribosyltransferase (358 aa).

The Proton acceptor role is filled by E313.

It belongs to the CobT family.

It catalyses the reaction 5,6-dimethylbenzimidazole + nicotinate beta-D-ribonucleotide = alpha-ribazole 5'-phosphate + nicotinate + H(+). It participates in nucleoside biosynthesis; alpha-ribazole biosynthesis; alpha-ribazole from 5,6-dimethylbenzimidazole: step 1/2. Its function is as follows. Catalyzes the synthesis of alpha-ribazole-5'-phosphate from nicotinate mononucleotide (NAMN) and 5,6-dimethylbenzimidazole (DMB). In Corynebacterium glutamicum (strain ATCC 13032 / DSM 20300 / JCM 1318 / BCRC 11384 / CCUG 27702 / LMG 3730 / NBRC 12168 / NCIMB 10025 / NRRL B-2784 / 534), this protein is Nicotinate-nucleotide--dimethylbenzimidazole phosphoribosyltransferase.